A 309-amino-acid chain; its full sequence is Serpentine receptor class gamma-47 (309 aa).

5 consecutive transmembrane segments (helical) span residues 22–42 (IVQM…LFLF), 140–160 (FKLY…VLPL), 190–210 (IYSS…IFYI), 230–250 (LITL…ILMA), and 272–292 (ISSD…DVGI).

Belongs to the nematode receptor-like protein srg family.

Its subcellular location is the membrane. The protein is Serpentine receptor class gamma-47 (srg-47) of Caenorhabditis elegans.